The sequence spans 581 residues: Frizzled-3 (581 aa).

Positions Met1–Ala19 are cleaved as a signal peptide. Over Ala20–Thr237 the chain is Extracellular. The FZ domain maps to Pro35–Ile156. Cystine bridges form between Cys40–Cys101, Cys48–Cys94, Cys85–Cys123, Cys112–Cys153, and Cys116–Cys141. N-linked (GlcNAc...) asparagine glycosylation occurs at Asn54. A glycan (N-linked (GlcNAc...) asparagine) is linked at Asn206. A helical membrane pass occupies residues Leu238–Trp258. The Cytoplasmic portion of the chain corresponds to Ala259–Pro270. The chain crosses the membrane as a helical span at residues Val271–Phe291. The Extracellular segment spans residues His292 to Tyr321. A helical membrane pass occupies residues Ile322 to Phe342. Topologically, residues Tyr343–Ser359 are cytoplasmic. Residues Gly360 to Leu380 traverse the membrane as a helical segment. The Extracellular portion of the chain corresponds to Glu381–Tyr393. A helical membrane pass occupies residues Ala394–Leu414. Residues Arg415 to Arg442 are Cytoplasmic-facing. A helical transmembrane segment spans residues Phe443–Cys463. The Extracellular portion of the chain corresponds to Glu464–Trp488. Residues Pro489–Trp509 form a helical membrane-spanning segment. The Cytoplasmic portion of the chain corresponds to Ser510 to Val581. The PDZ-binding signature appears at Ser579–Val581.

Belongs to the G-protein coupled receptor Fz/Smo family. As to expression, wing, leg and eye imaginal disks. In embryos, expressed is seen in brain, proventriculus, Malpighian tubules, anal plate and visceral mesoderm of parasegment 8.

It is found in the membrane. Receptor for Wnt proteins. Most of frizzled receptors are coupled to the beta-catenin canonical signaling pathway, which leads to the activation of disheveled proteins, inhibition of GSK-3 kinase, nuclear accumulation of beta-catenin and activation of Wnt target genes. A second signaling pathway involving PKC and calcium fluxes has been seen for some family members, but it is not yet clear if it represents a distinct pathway or if it can be integrated in the canonical pathway, as PKC seems to be required for Wnt-mediated inactivation of GSK-3 kinase. Both pathways seem to involve interactions with G-proteins. Required to coordinate the cytoskeletons of epidermal cells to produce a parallel array of cuticular hairs and bristles. The sequence is that of Frizzled-3 (fz3) from Drosophila melanogaster (Fruit fly).